Consider the following 625-residue polypeptide: 1-deoxy-D-xylulose-5-phosphate synthase 1 (625 aa).

Thiamine diphosphate-binding positions include histidine 74 and glycine 115 to threonine 117. Aspartate 146 is a Mg(2+) binding site. Residues glycine 147 to serine 148, asparagine 175, tyrosine 286, and glutamate 368 contribute to the thiamine diphosphate site. Asparagine 175 lines the Mg(2+) pocket.

It belongs to the transketolase family. DXPS subfamily. Homodimer. It depends on Mg(2+) as a cofactor. The cofactor is thiamine diphosphate.

It catalyses the reaction D-glyceraldehyde 3-phosphate + pyruvate + H(+) = 1-deoxy-D-xylulose 5-phosphate + CO2. Its pathway is metabolic intermediate biosynthesis; 1-deoxy-D-xylulose 5-phosphate biosynthesis; 1-deoxy-D-xylulose 5-phosphate from D-glyceraldehyde 3-phosphate and pyruvate: step 1/1. Its function is as follows. Catalyzes the acyloin condensation reaction between C atoms 2 and 3 of pyruvate and glyceraldehyde 3-phosphate to yield 1-deoxy-D-xylulose-5-phosphate (DXP). The sequence is that of 1-deoxy-D-xylulose-5-phosphate synthase 1 from Geobacter metallireducens (strain ATCC 53774 / DSM 7210 / GS-15).